The primary structure comprises 126 residues: MTATRCCLWLLLLGTCMALLLPEAWGAPLEPVYPGDDATPQQMAQYAAEMRRYINMLTRPRYGKSAEEDALGLPVWRQSHAAAPGGSHRHPPAGLPAAKGGTGVSGSPPKPWDCLPCRAHSLPSQS.

An N-terminal signal peptide occupies residues 1–26 (MTATRCCLWLLLLGTCMALLLPEAWG). Tyr62 carries the tyrosine amide modification. Positions 77-126 (RQSHAAAPGGSHRHPPAGLPAAKGGTGVSGSPPKPWDCLPCRAHSLPSQS) are disordered.

This sequence belongs to the NPY family. Post-translationally, no icosapeptide-like peptide is cleaved from the C-terminal.

It is found in the secreted. Functionally, hormone secreted by pancreatic cells that acts as a regulator of pancreatic and gastrointestinal functions probably by signaling through the G protein-coupled receptor NPY4R2. In Cavia porcellus (Guinea pig), this protein is Pancreatic polypeptide prohormone (PPY).